The following is a 258-amino-acid chain: Acyl-[acyl-carrier-protein]--UDP-N-acetylglucosamine O-acyltransferase (258 aa).

It belongs to the transferase hexapeptide repeat family. LpxA subfamily. Homotrimer.

It localises to the cytoplasm. It catalyses the reaction a (3R)-hydroxyacyl-[ACP] + UDP-N-acetyl-alpha-D-glucosamine = a UDP-3-O-[(3R)-3-hydroxyacyl]-N-acetyl-alpha-D-glucosamine + holo-[ACP]. It functions in the pathway glycolipid biosynthesis; lipid IV(A) biosynthesis; lipid IV(A) from (3R)-3-hydroxytetradecanoyl-[acyl-carrier-protein] and UDP-N-acetyl-alpha-D-glucosamine: step 1/6. In terms of biological role, involved in the biosynthesis of lipid A, a phosphorylated glycolipid that anchors the lipopolysaccharide to the outer membrane of the cell. The sequence is that of Acyl-[acyl-carrier-protein]--UDP-N-acetylglucosamine O-acyltransferase from Pseudomonas savastanoi pv. phaseolicola (strain 1448A / Race 6) (Pseudomonas syringae pv. phaseolicola (strain 1448A / Race 6)).